The following is a 524-amino-acid chain: Lysine--tRNA ligase (524 aa).

Mg(2+) is bound by residues Glu-431 and Glu-438.

The protein belongs to the class-II aminoacyl-tRNA synthetase family. In terms of assembly, homodimer. It depends on Mg(2+) as a cofactor.

The protein localises to the cytoplasm. It catalyses the reaction tRNA(Lys) + L-lysine + ATP = L-lysyl-tRNA(Lys) + AMP + diphosphate. The sequence is that of Lysine--tRNA ligase (lysS) from Chlamydia muridarum (strain MoPn / Nigg).